The primary structure comprises 88 residues: Small ribosomal subunit protein uS15 (88 aa).

This sequence belongs to the universal ribosomal protein uS15 family. In terms of assembly, part of the 30S ribosomal subunit. Forms a bridge to the 50S subunit in the 70S ribosome, contacting the 23S rRNA.

Functionally, one of the primary rRNA binding proteins, it binds directly to 16S rRNA where it helps nucleate assembly of the platform of the 30S subunit by binding and bridging several RNA helices of the 16S rRNA. Its function is as follows. Forms an intersubunit bridge (bridge B4) with the 23S rRNA of the 50S subunit in the ribosome. The sequence is that of Small ribosomal subunit protein uS15 from Mycoplasmopsis agalactiae (strain NCTC 10123 / CIP 59.7 / PG2) (Mycoplasma agalactiae).